A 311-amino-acid chain; its full sequence is Transcription factor bHLH145 (311 aa).

A bHLH domain is found at 253 to 302 (FLKRSKLSSNKIGEEKIFETVSLLRSVVPGEELVDPILVIDRAIDYLKSL).

As to quaternary structure, homodimer.

It is found in the nucleus. This is Transcription factor bHLH145 (BHLH145) from Arabidopsis thaliana (Mouse-ear cress).